The sequence spans 436 residues: N-lysine methyltransferase SMYD2 (436 aa).

The 235-residue stretch at 10–244 (GGLERFASPG…PGEEVFTSYI (235 aa)) folds into the SET domain. 20–22 (KGR) provides a ligand contact to S-adenosyl-L-methionine. Zn(2+) is bound by residues Cys-55, Cys-58, Cys-68, Cys-71, Cys-77, Cys-81, His-89, and Cys-93. The MYND-type zinc-finger motif lies at 55 to 93 (CDGCFARKEGLSKCGRCKQAFYCNVECQKEDWPMHKLEC). S-adenosyl-L-methionine contacts are provided by residues His-140, 209–210 (NH), and 261–263 (YFF).

Belongs to the class V-like SAM-binding methyltransferase superfamily.

The protein localises to the cytoplasm. It localises to the cytosol. The protein resides in the nucleus. It catalyses the reaction L-lysyl(4)-[histone H3] + 3 S-adenosyl-L-methionine = N(6),N(6),N(6)-trimethyl-L-lysyl(4)-[histone H3] + 3 S-adenosyl-L-homocysteine + 3 H(+). It carries out the reaction L-lysyl-[protein] + S-adenosyl-L-methionine = N(6)-methyl-L-lysyl-[protein] + S-adenosyl-L-homocysteine + H(+). Functionally, protein-lysine N-methyltransferase that methylates both histones and non-histone proteins, including p53/TP53 and RB1. Specifically trimethylates histone H3 'Lys-4' (H3K4me3) in vivo. The activity requires interaction with HSP90alpha. Shows even higher methyltransferase activity on p53/TP53. Monomethylates 'Lys-370' of p53/TP53, leading to decreased DNA-binding activity and subsequent transcriptional regulation activity of p53/TP53. Monomethylates RB1 at 'Lys-860'. This chain is N-lysine methyltransferase SMYD2 (SMYD2), found in Gallus gallus (Chicken).